Here is a 381-residue protein sequence, read N- to C-terminus: GDP-mannose transporter (381 aa).

At 1 to 39 (MVESKKTDDYAIEMDKIDQGSKNFEAAAPPQPRSVPSSS) the chain is on the cytoplasmic side. A helical membrane pass occupies residues 40 to 60 (LSGNPVLPVLAYCGSSILMTV). Residues 61–68 (MNKYVLSG) lie on the Lumenal side of the membrane. A helical membrane pass occupies residues 69–89 (LDFNLNFFLLCVQSIVCIIAI). The Cytoplasmic portion of the chain corresponds to 90–109 (QTCKFCGLITYRDFSADEAK). A helical transmembrane segment spans residues 110–126 (KWFPISLLLIGMIYTGS). Residues 127–133 (KALQFLS) are Lumenal-facing. Residues 134–150 (IPVYTIFKNLTIILIAY) form a helical membrane-spanning segment. The Cytoplasmic portion of the chain corresponds to 151-159 (GEVLWFGGS). The helical transmembrane segment at 160–181 (VTGLTLFSFGLMVLSSIIAAWA) threads the bilayer. Residues 182–199 (DIKHAVESSGDTSAQVST) are Lumenal-facing. Residues 200-220 (LNAGYIWMLINCLCTSSYVLG) form a helical membrane-spanning segment. The Cytoplasmic segment spans residues 221-232 (MRKRIKLTNFKD). Residues 233–253 (FDTMFYNNLLSIPVLVVLTGL) traverse the membrane as a helical segment. Over 254-273 (MEDWSSANIDRNFPQADRSS) the chain is Lumenal. The helical transmembrane segment at 274 to 294 (IMFAMILSGLSSVFISYTSAW) threads the bilayer. Over 295 to 302 (CVRVTSST) the chain is Cytoplasmic. The helical transmembrane segment at 303–323 (TYSMVGALNKLPIALSGLIFF) threads the bilayer. Residues 324-326 (DAP) lie on the Lumenal side of the membrane. Residues 327-347 (VTFPSVSAIAVGFVSGIVYAI) traverse the membrane as a helical segment. At 348-381 (AKIKQNAKPKTGVLPTSNPLVSASSQSMRDSLRS) the chain is on the cytoplasmic side.

It belongs to the TPT transporter family. SLC35D subfamily. Homooligomer.

It localises to the golgi apparatus membrane. Its subcellular location is the cytoplasmic vesicle membrane. The protein resides in the endoplasmic reticulum membrane. Functionally, involved in the import of GDP-mannose from the cytoplasm into the Golgi lumen. The protein is GDP-mannose transporter (gmt1) of Aspergillus oryzae (strain ATCC 42149 / RIB 40) (Yellow koji mold).